The primary structure comprises 450 residues: tRNA-2-methylthio-N(6)-dimethylallyladenosine synthase (450 aa).

The MTTase N-terminal domain maps to 14 to 132 (GEFFIETWGC…FPNYLNEVKK (119 aa)). Residues cysteine 23, cysteine 59, cysteine 93, cysteine 169, cysteine 173, and cysteine 176 each coordinate [4Fe-4S] cluster. The region spanning 155-385 (RKNSMKAFVT…VEVVNEISAK (231 aa)) is the Radical SAM core domain. The region spanning 388-450 (KAYEGKIEEV…NSFSLTGEEI (63 aa)) is the TRAM domain.

It belongs to the methylthiotransferase family. MiaB subfamily. As to quaternary structure, monomer. The cofactor is [4Fe-4S] cluster.

It localises to the cytoplasm. The catalysed reaction is N(6)-dimethylallyladenosine(37) in tRNA + (sulfur carrier)-SH + AH2 + 2 S-adenosyl-L-methionine = 2-methylsulfanyl-N(6)-dimethylallyladenosine(37) in tRNA + (sulfur carrier)-H + 5'-deoxyadenosine + L-methionine + A + S-adenosyl-L-homocysteine + 2 H(+). Functionally, catalyzes the methylthiolation of N6-(dimethylallyl)adenosine (i(6)A), leading to the formation of 2-methylthio-N6-(dimethylallyl)adenosine (ms(2)i(6)A) at position 37 in tRNAs that read codons beginning with uridine. This chain is tRNA-2-methylthio-N(6)-dimethylallyladenosine synthase, found in Clostridium botulinum (strain Langeland / NCTC 10281 / Type F).